Reading from the N-terminus, the 382-residue chain is Pyrimidine monooxygenase RutA (382 aa).

FMN is bound by residues 68-69 (IK), Asn-134, Glu-143, 159-160 (RY), and Ser-209.

Belongs to the NtaA/SnaA/DszA monooxygenase family. RutA subfamily.

The catalysed reaction is uracil + FMNH2 + NADH + O2 = (Z)-3-ureidoacrylate + FMN + NAD(+) + H2O + H(+). It carries out the reaction thymine + FMNH2 + NADH + O2 = (Z)-2-methylureidoacrylate + FMN + NAD(+) + H2O + H(+). Functionally, catalyzes the pyrimidine ring opening between N-3 and C-4 by an unusual flavin hydroperoxide-catalyzed mechanism, adding oxygen atoms in the process to yield ureidoacrylate peracid, that immediately reacts with FMN forming ureidoacrylate and FMN-N(5)-oxide. The FMN-N(5)-oxide reacts spontaneously with NADH to produce FMN. Requires the flavin reductase RutF to regenerate FMN in vivo. The protein is Pyrimidine monooxygenase RutA of Escherichia coli (strain SE11).